The chain runs to 102 residues: Acid shock protein (102 aa).

The N-terminal stretch at 1–21 (MKKVLALVVAAAMGLSSAAFA) is a signal peptide. Residues 22-41 (AETATTPAPTATTTKAAPAK) show a composition bias toward low complexity. A propeptide spanning residues 22 to 58 (AETATTPAPTATTTKAAPAKTTHHKKQHKAAPAQKAQ) is cleaved from the precursor. Positions 22–102 (AETATTPAPT…PAKPAAQPAA (81 aa)) are disordered. The segment covering 80-90 (AAKKHAKKHSH) has biased composition (basic residues). Low complexity predominate over residues 91 to 102 (QQPAKPAAQPAA).

It belongs to the Asr family. Post-translationally, proteolytic processing gives rise to the active protein.

The protein resides in the periplasm. Its function is as follows. Required for growth and/or survival at acidic conditions. The chain is Acid shock protein from Escherichia coli O17:K52:H18 (strain UMN026 / ExPEC).